A 159-amino-acid polypeptide reads, in one-letter code: LOB domain-containing protein 25 (159 aa).

The region spanning 38-139 (SPCAACKFLR…RELEETNADL (102 aa)) is the LOB domain.

This sequence belongs to the LOB domain-containing protein family. Expressed in young shoots, roots, stems, leaves and flowers.

In Arabidopsis thaliana (Mouse-ear cress), this protein is LOB domain-containing protein 25 (LBD25).